The primary structure comprises 382 residues: Protein RecA (382 aa).

Residue 79 to 86 coordinates ATP; it reads GPESSGKT. A disordered region spans residues 362 to 382; the sequence is ATKSAAKGSEVQADVKTKGAA.

Belongs to the RecA family.

The protein localises to the cytoplasm. In terms of biological role, can catalyze the hydrolysis of ATP in the presence of single-stranded DNA, the ATP-dependent uptake of single-stranded DNA by duplex DNA, and the ATP-dependent hybridization of homologous single-stranded DNAs. It interacts with LexA causing its activation and leading to its autocatalytic cleavage. This is Protein RecA from Synechococcus sp. (strain WH7803).